A 149-amino-acid chain; its full sequence is Transcription factor MafF (149 aa).

The tract at residues 51–76 (RLKQRRRTLKNRGYAASCRVKRVCQK) is basic motif. In terms of domain architecture, bZIP spans 51 to 114 (RLKQRRRTLK…DTLRGKYEAL (64 aa)). A leucine-zipper region spans residues 79–93 (LQKQKMELEWEVDKL).

Belongs to the bZIP family. Maf subfamily. As to quaternary structure, monomer and homo- or heterodimer. Highly expressed in the ovary, lower expression in the brain, heart and mesenterium.

Its subcellular location is the nucleus. Its function is as follows. Since it lacks a putative transactivation domain, it may behave as a transcriptional repressor when it dimerizes among itself. May also serve as a transcriptional activator by dimerizing with other (usually larger) basic-zipper proteins and recruiting them to specific DNA-binding sites. May be involved in the cellular stress response. This Gallus gallus (Chicken) protein is Transcription factor MafF (MAFF).